A 153-amino-acid polypeptide reads, in one-letter code: ATP synthase subunit b' (153 aa).

Residues 20-40 form a helical membrane-spanning segment; that stretch reads TLPLMAAQVVLLTFILNALFF.

The protein belongs to the ATPase B chain family. As to quaternary structure, F-type ATPases have 2 components, F(1) - the catalytic core - and F(0) - the membrane proton channel. F(1) has five subunits: alpha(3), beta(3), gamma(1), delta(1), epsilon(1). F(0) has four main subunits: a(1), b(1), b'(1) and c(10-14). The alpha and beta chains form an alternating ring which encloses part of the gamma chain. F(1) is attached to F(0) by a central stalk formed by the gamma and epsilon chains, while a peripheral stalk is formed by the delta, b and b' chains.

The protein resides in the cellular thylakoid membrane. In terms of biological role, f(1)F(0) ATP synthase produces ATP from ADP in the presence of a proton or sodium gradient. F-type ATPases consist of two structural domains, F(1) containing the extramembraneous catalytic core and F(0) containing the membrane proton channel, linked together by a central stalk and a peripheral stalk. During catalysis, ATP synthesis in the catalytic domain of F(1) is coupled via a rotary mechanism of the central stalk subunits to proton translocation. Functionally, component of the F(0) channel, it forms part of the peripheral stalk, linking F(1) to F(0). The b'-subunit is a diverged and duplicated form of b found in plants and photosynthetic bacteria. The sequence is that of ATP synthase subunit b' from Prochlorococcus marinus (strain SARG / CCMP1375 / SS120).